We begin with the raw amino-acid sequence, 239 residues long: Phosphoribosylaminoimidazole-succinocarboxamide synthase (239 aa).

Belongs to the SAICAR synthetase family.

It carries out the reaction 5-amino-1-(5-phospho-D-ribosyl)imidazole-4-carboxylate + L-aspartate + ATP = (2S)-2-[5-amino-1-(5-phospho-beta-D-ribosyl)imidazole-4-carboxamido]succinate + ADP + phosphate + 2 H(+). It participates in purine metabolism; IMP biosynthesis via de novo pathway; 5-amino-1-(5-phospho-D-ribosyl)imidazole-4-carboxamide from 5-amino-1-(5-phospho-D-ribosyl)imidazole-4-carboxylate: step 1/2. This chain is Phosphoribosylaminoimidazole-succinocarboxamide synthase, found in Bacillus cereus (strain 03BB102).